The following is a 156-amino-acid chain: D-aminoacyl-tRNA deacylase (156 aa).

A Gly-cisPro motif, important for rejection of L-amino acids motif is present at residues 142–143 (GP).

It belongs to the DTD family. In terms of assembly, homodimer.

The protein localises to the cytoplasm. The enzyme catalyses glycyl-tRNA(Ala) + H2O = tRNA(Ala) + glycine + H(+). It carries out the reaction a D-aminoacyl-tRNA + H2O = a tRNA + a D-alpha-amino acid + H(+). Functionally, an aminoacyl-tRNA editing enzyme that deacylates mischarged D-aminoacyl-tRNAs. Also deacylates mischarged glycyl-tRNA(Ala), protecting cells against glycine mischarging by AlaRS. Acts via tRNA-based rather than protein-based catalysis; rejects L-amino acids rather than detecting D-amino acids in the active site. By recycling D-aminoacyl-tRNA to D-amino acids and free tRNA molecules, this enzyme counteracts the toxicity associated with the formation of D-aminoacyl-tRNA entities in vivo and helps enforce protein L-homochirality. This Cupriavidus pinatubonensis (strain JMP 134 / LMG 1197) (Cupriavidus necator (strain JMP 134)) protein is D-aminoacyl-tRNA deacylase.